The primary structure comprises 99 residues: DNA/RNA-binding protein Alba 1 (99 aa).

K17 is subject to N6-acetyllysine.

Belongs to the histone-like Alba family. Acetylated. Acetylation at Lys-17 decreases DNA-binding affinity.

Its subcellular location is the cytoplasm. It localises to the chromosome. Binds double-stranded DNA tightly but without sequence specificity. Involved in DNA compaction. In Sulfurisphaera tokodaii (strain DSM 16993 / JCM 10545 / NBRC 100140 / 7) (Sulfolobus tokodaii), this protein is DNA/RNA-binding protein Alba 1.